A 417-amino-acid chain; its full sequence is Inhibitor of growth protein 3 (417 aa).

Disordered regions lie at residues 126–165 (LDTPSQPVNNHHVHSHSLGEKRKHNPSSHHSTTDHVSEKK), 177–198 (SDASKENTAGCRNNLSSSSTNN), and 284–320 (QTLTSSATTDSRSGRKSKSNNKSASQQSSSSSSSSSL). Positions 136–152 (HHVHSHSLGEKRKHNPS) are enriched in basic residues. Positions 156–165 (STTDHVSEKK) are enriched in basic and acidic residues. The segment covering 177 to 187 (SDASKENTAGC) has biased composition (polar residues). 3 stretches are compositionally biased toward low complexity: residues 189 to 198 (NNLSSSSTNN), 284 to 294 (QTLTSSATTDS), and 303 to 320 (NNKSASQQSSSSSSSSSL). A PHD-type zinc finger spans residues 359–408 (PRYCICNQVSYGEMVGCDNQDCPIEWFHYGCVGLSEAPKGKWYCPQCTAA). The Zn(2+) site is built by cysteine 362, cysteine 364, cysteine 375, cysteine 380, histidine 386, cysteine 389, cysteine 402, and cysteine 405.

This sequence belongs to the ING family. In terms of assembly, interacts with H3K4me3 and to a lesser extent with H3K4me2. Component of the NuA4 histone acetyltransferase complex.

Its subcellular location is the nucleus. Functionally, component of the NuA4 histone acetyltransferase (HAT) complex which is involved in transcriptional activation of select genes principally by acetylation of nucleosomal histone H4 and H2A. This modification may both alter nucleosome - DNA interactions and promote interaction of the modified histones with other proteins which positively regulate transcription. NuA4 may also play a direct role in DNA repair when directly recruited to sites of DNA damage. This chain is Inhibitor of growth protein 3 (ing3), found in Xenopus tropicalis (Western clawed frog).